The following is a 375-amino-acid chain: CD2 homolog (375 aa).

The N-terminal stretch at 1–16 (MIIILIFLIIPNIVLS) is a signal peptide. At 17–207 (IDYWVSFNKT…YLDFFQVASY (191 aa)) the chain is on the extracellular side. N24, N80, N105, N122, N134, N145, N168, N176, and N183 each carry an N-linked (GlcNAc...) asparagine; by host glycan. Cystine bridges form between C123–C190 and C130–C173. The helical transmembrane segment at 208 to 228 (MFYMIIFIATGIIASIFISII) threads the bilayer. At 229-375 (TFLSLRKRKK…ISLIHVDRII (147 aa)) the chain is on the cytoplasmic side. Residues 242–278 (EIESPSPSESNEEEQCQHDDTTSIHEPSPREPLLPKP) form a disordered region. Basic and acidic residues predominate over residues 256 to 270 (QCQHDDTTSIHEPSP). Tandem repeats lie at residues 305–310 (KLCPPP), 311–316 (KPCPPP), 317–322 (KPCPPP), 323–328 (KPCPPP), and 329–334 (KPCPSS). The 5 X 6 AA tandem repeats of K-[LP]-C-[PRS]-[PS]-[PS] stretch occupies residues 305–334 (KLCPPPKPCPPPKPCPPPKPCPPPKPCPSS). A disordered region spans residues 323–350 (KPCPPPKPCPSSESCSPPESYSLPKPLP). Positions 332–346 (PSSESCSPPESYSLP) are enriched in low complexity.

Belongs to the asfivirus CD2 homolog protein family. Both glycosylated and nonglycosylated forms interact (via C-terminus) with the host AP-1 complex. In terms of processing, cleaved into two fragments of 63 kDa and 26 kDa containing respectively the glycosylated N-terminus and the nonglycosylated C-terminus. A full-length 89-kDa glycosylated form also exists.

Its subcellular location is the host membrane. It is found in the virion membrane. The protein localises to the host Golgi apparatus. May play an immunosuppressive role by inhibiting lymphocyte proliferation and subsequently facilitating viral replication and generalization of infection. Responsible for viral hemadsorption, which may help viral spread. Increases virus replication in the tick vector at the step of virus uptake or replication in the tick gut. May play a role in the host Golgi reorganization to yield viral factories. May play a role in host cell penetration. In Ornithodoros (relapsing fever ticks), this protein is CD2 homolog.